The sequence spans 151 residues: NADPH-dependent 7-cyano-7-deazaguanine reductase (151 aa).

Catalysis depends on C51, which acts as the Thioimide intermediate. D58 serves as the catalytic Proton donor. Substrate-binding positions include 73 to 75 and 92 to 93; these read VES and HE.

This sequence belongs to the GTP cyclohydrolase I family. QueF type 1 subfamily.

Its subcellular location is the cytoplasm. It carries out the reaction 7-aminomethyl-7-carbaguanine + 2 NADP(+) = 7-cyano-7-deazaguanine + 2 NADPH + 3 H(+). It functions in the pathway tRNA modification; tRNA-queuosine biosynthesis. Functionally, catalyzes the NADPH-dependent reduction of 7-cyano-7-deazaguanine (preQ0) to 7-aminomethyl-7-deazaguanine (preQ1). The polypeptide is NADPH-dependent 7-cyano-7-deazaguanine reductase (Bacteroides fragilis (strain YCH46)).